The chain runs to 97 residues: Serine protease inhibitor Kazal-type 13 (97 aa).

The signal sequence occupies residues 1–26; sequence MTRRGCWPHRIIFSLILLTWTHVTLA. The Kazal-like domain occupies 36–97; that stretch reads NWPKPPCKMY…IEFVKYGKCE (62 aa). Cystine bridges form between C42-C78, C56-C75, and C64-C96.

As to expression, restricted to the epididymis, with highest levels in the initial segment, including epithelial cells, lumen, and sperm (at protein level). Localizes to the sperm heads, where it is restricted to the acrosomal region in epididymal spermatozoa, but not in testicular spermatozoa (at protein level).

The protein resides in the secreted. May be a serine protease inhibitor. Essential for sperm maturation and fertility. Inhibits sperm acrosome reaction, protecting sperm from premature reaction. This Rattus norvegicus (Rat) protein is Serine protease inhibitor Kazal-type 13 (Spink13).